We begin with the raw amino-acid sequence, 292 residues long: Hydroxysqualene synthase (292 aa).

The protein belongs to the phytoene/squalene synthase family. HpnC subfamily.

It carries out the reaction presqualene diphosphate + H2O = hydroxysqualene + diphosphate. It functions in the pathway secondary metabolite biosynthesis; hopanoid biosynthesis. In terms of biological role, involved in the biosynthesis of the hopanoid precursor squalene (SQ) from farnesyl diphosphate (FPP). Catalyzes the second step, the conversion of presqualene diphosphate (PSPP) to hydroxysqualene (HSQ). This Sinorhizobium fredii (strain NBRC 101917 / NGR234) protein is Hydroxysqualene synthase.